We begin with the raw amino-acid sequence, 159 residues long: Transcription elongation factor A protein-like 1 (159 aa).

Residues 1–121 (MDKPRKENEE…QFKGDIHGRN (121 aa)) are disordered. Positions 17-34 (KTDEERPPVEHSPEKQSP) are enriched in basic and acidic residues. Over residues 37–54 (QSSEEQSSEEEFFPEELL) the composition is skewed to acidic residues. 2 stretches are compositionally biased toward basic and acidic residues: residues 64-80 (SEER…DLFE) and 95-119 (HKLE…DIHG).

The protein belongs to the TFS-II family. TFA subfamily.

The protein localises to the nucleus. In terms of biological role, may be involved in transcriptional regulation. Modulates various viral and cellular promoters in a promoter context-dependent manner. Does not bind DNA directly. This Gorilla gorilla gorilla (Western lowland gorilla) protein is Transcription elongation factor A protein-like 1.